Here is a 291-residue protein sequence, read N- to C-terminus: Pituitary-specific positive transcription factor 1 (291 aa).

The short motif at A5–I13 is the 9aaTAD element. Residues M124–E198 form the POU-specific domain. The homeobox DNA-binding region spans K214 to K273.

This sequence belongs to the POU transcription factor family. Class-1 subfamily. In terms of assembly, interacts with PITX1. Interacts with LHX3. Interacts with ELK1.

It localises to the nucleus. Its function is as follows. Transcription factor involved in the specification of the lactotrope, somatotrope, and thyrotrope phenotypes in the developing anterior pituitary. Specifically binds to the consensus sequence 5'-TAAAT-3'. Activates growth hormone and prolactin genes. This Homo sapiens (Human) protein is Pituitary-specific positive transcription factor 1 (POU1F1).